The primary structure comprises 1649 residues: eIF-2-alpha kinase GCN2 (1649 aa).

3 disordered regions span residues 1 to 25, 138 to 158, and 227 to 256; these read MAGGRGAPGRGRDEPPESYPQRQDH, NKPPPKSFHEEMLERRAQEEQ, and HGGSPDFVGNGKHRANSSGRSRRERQYSVC. An RWD domain is found at 25–137; it reads HELQALEAIY…YHVQSFLSEH (113 aa). A coiled-coil region spans residues 146-205; that stretch reads HEEMLERRAQEEQQRLLEAKRKEEQEQREILHEIQRRKEEIKEEKKRKEMAKQERLEIAS. Serine 230 carries the post-translational modification Phosphoserine. A compositionally biased stretch (basic residues) spans 237 to 249; sequence GKHRANSSGRSRR. Protein kinase domains lie at 296-539 and 590-1001; these read VYNA…HSFI and FEEL…SELL. ATP-binding positions include 596–604 and lysine 619; that span reads LGKGAFGAV. Disordered stretches follow at residues 660–750 and 766–788; these read ERPA…QSFL and ENSKSQNQDEDCNEKNGCHESEP. Threonine 667 carries the phosphothreonine modification. Residues 705 to 717 are compositionally biased toward polar residues; sequence LSSSVEWSTSGER. The span at 731–740 shows a compositional bias: acidic residues; the sequence is SDDEDDDEDE. The segment covering 778–787 has biased composition (basic and acidic residues); it reads NEKNGCHESE. The Proton acceptor role is filled by aspartate 848. Threonine 871 carries the post-translational modification Phosphothreonine. Threonine 899 and threonine 904 each carry phosphothreonine; by autocatalysis. The tract at residues 1022–1493 is histidyl-tRNA synthetase-like; it reads VDGKAYRTMM…DHVLQKLRTK (472 aa). Position 1259 is an N6-acetyllysine (lysine 1259).

It belongs to the protein kinase superfamily. Ser/Thr protein kinase family. GCN2 subfamily. As to quaternary structure, homodimer; homodimerization is important for kinase activation by uncharged tRNAs. Interacts with GCN1; this interaction stimulates EIF2AK4/GCN2 kinase activity and is impaired by IMPACT upon a variety of stress conditions, such as amino acid depletion, UV-C irradiation, proteasome inhibitor treatment and glucose deprivation. Interacts with DNAJC3; this interaction inhibits EIF2AK4/GCN2 kinase activity during endoplasmic reticulum (ER), hypothermic and amino acid-starving stress conditions. Interacts with MAP3K20; activates EIF2AK4/GCN2 kinase activity in response to moderate ribotoxic stress. (Microbial infection) Interacts with hepatitis E virus (HEV) ORF1 protease; this interaction inhibits dimerization of EIF2AK4 and prevents EIF2AK4-mediated phosphorylation of EIF2A. In terms of processing, autophosphorylated; autophosphorylation on Thr-899 is increased upon amino acid starvation and in UV irradiation cells and inhibited in presence of IMPACT. In terms of tissue distribution, widely expressed. Expressed in lung, smooth muscle cells and macrophages.

The protein resides in the cytoplasm. The catalysed reaction is L-seryl-[protein] + ATP = O-phospho-L-seryl-[protein] + ADP + H(+). It carries out the reaction L-threonyl-[protein] + ATP = O-phospho-L-threonyl-[protein] + ADP + H(+). Metabolic-stress sensing protein kinase that phosphorylates the alpha subunit of eukaryotic translation initiation factor 2 (EIF2S1/eIF-2-alpha) in response to low amino acid availability. Plays a role as an activator of the integrated stress response (ISR) required for adaptation to amino acid starvation. EIF2S1/eIF-2-alpha phosphorylation in response to stress converts EIF2S1/eIF-2-alpha into a global protein synthesis inhibitor, leading to a global attenuation of cap-dependent translation, and thus to a reduced overall utilization of amino acids, while concomitantly initiating the preferential translation of ISR-specific mRNAs, such as the transcriptional activator ATF4, and hence allowing ATF4-mediated reprogramming of amino acid biosynthetic gene expression to alleviate nutrient depletion. Binds uncharged tRNAs. Required for the translational induction of protein kinase PRKCH following amino acid starvation. Involved in cell cycle arrest by promoting cyclin D1 mRNA translation repression after the unfolded protein response pathway (UPR) activation or cell cycle inhibitor CDKN1A/p21 mRNA translation activation in response to amino acid deprivation. Plays a role in the consolidation of synaptic plasticity, learning as well as formation of long-term memory. Plays a role in neurite outgrowth inhibition. Plays a proapoptotic role in response to glucose deprivation. Promotes global cellular protein synthesis repression in response to UV irradiation independently of the stress-activated protein kinase/c-Jun N-terminal kinase (SAPK/JNK) and p38 MAPK signaling pathways. Plays a role in the antiviral response against alphavirus infection; impairs early viral mRNA translation of the incoming genomic virus RNA, thus preventing alphavirus replication. Functionally, (Microbial infection) Plays a role in modulating the adaptive immune response to yellow fever virus infection; promotes dendritic cells to initiate autophagy and antigene presentation to both CD4(+) and CD8(+) T-cells under amino acid starvation. In Homo sapiens (Human), this protein is eIF-2-alpha kinase GCN2.